Consider the following 674-residue polypeptide: Linear primary-alkylsulfatase (674 aa).

Positions 1–41 (MKLNALSTATHGSRSSPVKLWKFSTSFLLAASIIVSGQSWA) are cleaved as a signal peptide. Zn(2+) is bound by residues His-192, His-194, Asp-196, His-197, Glu-303, and Glu-322. Sulfate contacts are provided by residues 330 to 335 (NTYSLR) and Arg-340. His-367 serves as a coordination point for Zn(2+). A sulfate-binding site is contributed by Tyr-428.

The protein belongs to the metallo-beta-lactamase superfamily. Type III sulfatase family. In terms of assembly, homodimer. It depends on Zn(2+) as a cofactor.

The protein resides in the periplasm. The catalysed reaction is a primary linear alkyl sulfate ester + H2O = a primary alcohol + sulfate + H(+). Inhibited by EDTA. Slightly activated in the presence of Ca(2+). In terms of biological role, alkylsulfatase that cleaves primary alkyl sulfates such as sodium octyl sulfate and the widely used detergent sodium dodecyl sulfate (SDS). This Pseudomonas sp protein is Linear primary-alkylsulfatase.